The sequence spans 506 residues: Maturase K (506 aa).

Belongs to the intron maturase 2 family. MatK subfamily.

The protein resides in the plastid. The protein localises to the chloroplast. Functionally, usually encoded in the trnK tRNA gene intron. Probably assists in splicing its own and other chloroplast group II introns. The polypeptide is Maturase K (Phyllodoce caerulea (Blue mountain heath)).